The chain runs to 417 residues: Tol-Pal system protein TolB (417 aa).

The first 16 residues, 1–16 (MKYLWLFLIYAIGLFA), serve as a signal peptide directing secretion.

This sequence belongs to the TolB family. In terms of assembly, the Tol-Pal system is composed of five core proteins: the inner membrane proteins TolA, TolQ and TolR, the periplasmic protein TolB and the outer membrane protein Pal. They form a network linking the inner and outer membranes and the peptidoglycan layer.

The protein localises to the periplasm. Part of the Tol-Pal system, which plays a role in outer membrane invagination during cell division and is important for maintaining outer membrane integrity. This Helicobacter pylori (strain J99 / ATCC 700824) (Campylobacter pylori J99) protein is Tol-Pal system protein TolB.